A 227-amino-acid polypeptide reads, in one-letter code: LexA repressor (227 aa).

The H-T-H motif DNA-binding region spans F25–T45. Active-site for autocatalytic cleavage activity residues include S148 and K186.

This sequence belongs to the peptidase S24 family. Homodimer.

It catalyses the reaction Hydrolysis of Ala-|-Gly bond in repressor LexA.. In terms of biological role, represses a number of genes involved in the response to DNA damage (SOS response), including recA and lexA. In the presence of single-stranded DNA, RecA interacts with LexA causing an autocatalytic cleavage which disrupts the DNA-binding part of LexA, leading to derepression of the SOS regulon and eventually DNA repair. The chain is LexA repressor from Cereibacter sphaeroides (strain ATCC 17029 / ATH 2.4.9) (Rhodobacter sphaeroides).